The following is a 1164-amino-acid chain: DNA-directed RNA polymerase subunit beta' (1164 aa).

The Zn(2+) site is built by Cys60, Cys62, Cys75, and Cys78. 3 residues coordinate Mg(2+): Asp449, Asp451, and Asp453. Zn(2+) contacts are provided by Cys776, Cys850, Cys857, and Cys860.

Belongs to the RNA polymerase beta' chain family. In terms of assembly, the RNAP catalytic core consists of 2 alpha, 1 beta, 1 beta' and 1 omega subunit. When a sigma factor is associated with the core the holoenzyme is formed, which can initiate transcription. It depends on Mg(2+) as a cofactor. The cofactor is Zn(2+).

The enzyme catalyses RNA(n) + a ribonucleoside 5'-triphosphate = RNA(n+1) + diphosphate. DNA-dependent RNA polymerase catalyzes the transcription of DNA into RNA using the four ribonucleoside triphosphates as substrates. The chain is DNA-directed RNA polymerase subunit beta' from Moorella thermoacetica (strain ATCC 39073 / JCM 9320).